Consider the following 149-residue polypeptide: Nucleoside diphosphate kinase (149 aa).

ATP contacts are provided by Lys9, Phe57, Arg85, Thr91, Arg102, and Asn112. The Pros-phosphohistidine intermediate role is filled by His115.

The protein belongs to the NDK family. In terms of assembly, homotetramer. Requires Mg(2+) as cofactor.

It is found in the cytoplasm. The catalysed reaction is dZDP + ATP = dZTP + ADP. It catalyses the reaction a 2'-deoxyribonucleoside 5'-diphosphate + ATP = a 2'-deoxyribonucleoside 5'-triphosphate + ADP. It carries out the reaction a ribonucleoside 5'-diphosphate + ATP = a ribonucleoside 5'-triphosphate + ADP. It functions in the pathway purine metabolism. Its function is as follows. Major role in the synthesis of nucleoside triphosphates other than ATP. The ATP gamma phosphate is transferred to the NDP beta phosphate via a ping-pong mechanism, using a phosphorylated active-site intermediate. Functionally, (Microbial infection) Catalyzes the phosphorylation of dZDP to dZTP, when the bacterium is infected by a phage that produces the substrate for the synthesis of dZTP (2- amino-2'-deoxyadenosine 5'-triphosphate), which is then used by the phage as a DNA polymerase substrate. This Picosynechococcus sp. (strain ATCC 27264 / PCC 7002 / PR-6) (Agmenellum quadruplicatum) protein is Nucleoside diphosphate kinase.